The following is an 873-amino-acid chain: Tetratricopeptide repeat protein 16 (873 aa).

The tract at residues 1–20 (MTDSDEDALKVDQGPSRDIP) is disordered. TPR repeat units lie at residues 61–94 (VREYYSRGQQCLEQADWETAVLLFSRALHLDPQL), 96–128 (DFYALRAEAYLQLCDFSSAAQNLRRAYSLQQDN), 136–169 (TFVLYLQGQCLFEQCAFLDALNVFSHAAELQPEK), 251–284 (AQQARQDAGILAVQGKLQHALQRINRAIENNPLD), 285–318 (PSLFLFRGTMYRRLQEFDGAVEDFLKVLDMVTED), 331–364 (LLTYNDFAVHCYRQGAYQEGVLLLNKALRDEQQE), 365–398 (KGLYINRGDCFFQLGNLAFAEADYQQALALSPQD), and 406–439 (GLLQEKMGFCEQRRKQFQKAENHFSTAIRHNPQK). 2 disordered regions span residues 553 to 626 (EELK…TSET) and 639 to 873 (SATA…YEAV). Acidic residues predominate over residues 571–582 (GEAEAPEEEEEK). Positions 583 to 593 (EKEKKEEKKSE) are enriched in basic and acidic residues. 3 stretches are compositionally biased toward polar residues: residues 600–626 (ASLSDSYLDQTSSASSMSFRTTGTSET), 639–663 (SATAVTFSDSSLLKTQSSDSGNNRE), and 675–693 (TQGQRQSLSKTEPTQSQRR). Over residues 694-708 (NSSKTKATIHKRNSS) the composition is skewed to basic residues. A compositionally biased stretch (polar residues) spans 709–750 (KTKATQSQRRNSSKTRATQGQGQSSSKTEATQGQRQSSSEIE). The span at 763–784 (KTTRSPRQRPRKVKAARGRSWR) shows a compositional bias: basic residues. 2 stretches are compositionally biased toward polar residues: residues 800 to 828 (RSSTKTEAFYDSNWSLSKTEYAQGQGQRS) and 836 to 860 (GKSQGMSSTSSKAESTWGPSPSLSK).

The protein is Tetratricopeptide repeat protein 16 (TTC16) of Homo sapiens (Human).